The following is a 450-amino-acid chain: Chromosomal replication initiator protein DnaA (450 aa).

The domain I, interacts with DnaA modulators stretch occupies residues 1-77 (MTENEQIFWN…EVYNAQIAVD (77 aa)). Residues 77–109 (DYVYEDDLMIEQQHQGQQGYTEQAFQQLPAVQS) are domain II. A domain III, AAA+ region region spans residues 110–328 (DLNPKYSFDN…GALKDISLVA (219 aa)). Residues Gly-154, Gly-156, Lys-157, and Thr-158 each contribute to the ATP site. Residues 329–450 (NFKQIDTITV…EIETIKNKIK (122 aa)) form a domain IV, binds dsDNA region.

The protein belongs to the DnaA family. In terms of assembly, oligomerizes as a right-handed, spiral filament on DNA at oriC.

It localises to the cytoplasm. In terms of biological role, plays an essential role in the initiation and regulation of chromosomal replication. ATP-DnaA binds to the origin of replication (oriC) to initiate formation of the DNA replication initiation complex once per cell cycle. Binds the DnaA box (a 9 base pair repeat at the origin) and separates the double-stranded (ds)DNA. Forms a right-handed helical filament on oriC DNA; dsDNA binds to the exterior of the filament while single-stranded (ss)DNA is stabiized in the filament's interior. The ATP-DnaA-oriC complex binds and stabilizes one strand of the AT-rich DNA unwinding element (DUE), permitting loading of DNA polymerase. After initiation quickly degrades to an ADP-DnaA complex that is not apt for DNA replication. Binds acidic phospholipids. The polypeptide is Chromosomal replication initiator protein DnaA (Streptococcus equi subsp. equi (strain 4047)).